Here is a 287-residue protein sequence, read N- to C-terminus: Ribosomal RNA small subunit methyltransferase A (287 aa).

Positions 35, 37, 62, 83, 113, and 131 each coordinate S-adenosyl-L-methionine.

It belongs to the class I-like SAM-binding methyltransferase superfamily. rRNA adenine N(6)-methyltransferase family. RsmA subfamily.

The protein resides in the cytoplasm. It catalyses the reaction adenosine(1518)/adenosine(1519) in 16S rRNA + 4 S-adenosyl-L-methionine = N(6)-dimethyladenosine(1518)/N(6)-dimethyladenosine(1519) in 16S rRNA + 4 S-adenosyl-L-homocysteine + 4 H(+). In terms of biological role, specifically dimethylates two adjacent adenosines (A1518 and A1519) in the loop of a conserved hairpin near the 3'-end of 16S rRNA in the 30S particle. May play a critical role in biogenesis of 30S subunits. The polypeptide is Ribosomal RNA small subunit methyltransferase A (Thermobifida fusca (strain YX)).